The following is a 369-amino-acid chain: Mitogen-activated protein kinase 4 (369 aa).

In terms of domain architecture, Protein kinase spans 32 to 319 (YVPIKPIGRG…VTEALEHPYM (288 aa)). Residues 38-46 (IGRGAYGIV) and lysine 61 each bind ATP. The Proton acceptor role is filled by aspartate 158. Residue threonine 191 is modified to Phosphothreonine. The TXY motif lies at 191-193 (TEY). Tyrosine 193 carries the post-translational modification Phosphotyrosine.

Belongs to the protein kinase superfamily. CMGC Ser/Thr protein kinase family. MAP kinase subfamily. In terms of processing, dually phosphorylated on Thr-191 and Tyr-193, which activates the enzyme. As to expression, expressed in leaves and panicles.

The catalysed reaction is L-seryl-[protein] + ATP = O-phospho-L-seryl-[protein] + ADP + H(+). The enzyme catalyses L-threonyl-[protein] + ATP = O-phospho-L-threonyl-[protein] + ADP + H(+). With respect to regulation, activated by threonine and tyrosine phosphorylation. This chain is Mitogen-activated protein kinase 4 (MPK4), found in Oryza sativa subsp. japonica (Rice).